Consider the following 460-residue polypeptide: Cysteine--tRNA ligase (460 aa).

C28 is a Zn(2+) binding site. Residues 30-40 (MTVYDYCHLGH) carry the 'HIGH' region motif. Residues C209, H234, and E238 each contribute to the Zn(2+) site. The 'KMSKS' region signature appears at 266–270 (KMSKS). K269 is a binding site for ATP.

This sequence belongs to the class-I aminoacyl-tRNA synthetase family. Monomer. It depends on Zn(2+) as a cofactor.

It is found in the cytoplasm. The catalysed reaction is tRNA(Cys) + L-cysteine + ATP = L-cysteinyl-tRNA(Cys) + AMP + diphosphate. In Pseudomonas entomophila (strain L48), this protein is Cysteine--tRNA ligase.